The sequence spans 524 residues: Lysine--tRNA ligase (524 aa).

Residues Glu-433 and Glu-440 each contribute to the Mg(2+) site.

This sequence belongs to the class-II aminoacyl-tRNA synthetase family. As to quaternary structure, homodimer. The cofactor is Mg(2+).

It localises to the cytoplasm. It carries out the reaction tRNA(Lys) + L-lysine + ATP = L-lysyl-tRNA(Lys) + AMP + diphosphate. The polypeptide is Lysine--tRNA ligase (Colwellia psychrerythraea (strain 34H / ATCC BAA-681) (Vibrio psychroerythus)).